Here is a 335-residue protein sequence, read N- to C-terminus: Protease HtpX homolog (335 aa).

Transmembrane regions (helical) follow at residues 9-29 (VYMM…STIA), 42-62 (LFTS…AIIY), and 64-84 (ILAY…LLII). Position 168 (His168) interacts with Zn(2+). Glu169 is a catalytic residue. His172 contacts Zn(2+). A run of 2 helical transmembrane segments spans residues 179–199 (AVML…YALL) and 213–233 (AAIG…VLAF). A Zn(2+)-binding site is contributed by Glu238.

Belongs to the peptidase M48B family. Zn(2+) is required as a cofactor.

It localises to the cell membrane. In Archaeoglobus fulgidus (strain ATCC 49558 / DSM 4304 / JCM 9628 / NBRC 100126 / VC-16), this protein is Protease HtpX homolog.